The sequence spans 256 residues: Probable transcriptional regulatory protein A1I_03240 (256 aa).

Residues 1–21 are disordered; it reads MAGHSKFKNIQHRKGAQDKKR.

This sequence belongs to the TACO1 family.

It localises to the cytoplasm. The chain is Probable transcriptional regulatory protein A1I_03240 from Rickettsia bellii (strain OSU 85-389).